Reading from the N-terminus, the 99-residue chain is MIPKGTVKRIMKDNTEMYVSTESVVALVDILQEMIVTTTKIAEENAAKDKRKTIKARDIEECDAERLKEKILQVSERTEKVNMLANEILHVIASELERY.

The interval 52–55 (KTIK) is interaction with DNA.

It belongs to the archaeal histone HMF family. In terms of assembly, homodimer or heterodimer with another histone. Dimers then assemble into higher oligomers, with the DNA wrapped around the protein core.

The protein localises to the cytoplasm. It localises to the chromosome. In terms of biological role, binds and compact DNA (95 to 150 base pairs) to form nucleosome-like structures that contain positive DNA supercoils. Increases the resistance of DNA to thermal denaturation (in vitro). The polypeptide is DNA-binding protein HmvA (hmvA) (Methanococcus voltae).